Here is a 151-residue protein sequence, read N- to C-terminus: Deoxyuridine 5'-triphosphate nucleotidohydrolase (151 aa).

Substrate-binding positions include Arg70–Gly72, Asn83, Leu87–Asp89, and Met97.

It belongs to the dUTPase family. Mg(2+) is required as a cofactor.

It carries out the reaction dUTP + H2O = dUMP + diphosphate + H(+). Its pathway is pyrimidine metabolism; dUMP biosynthesis; dUMP from dCTP (dUTP route): step 2/2. Functionally, this enzyme is involved in nucleotide metabolism: it produces dUMP, the immediate precursor of thymidine nucleotides and it decreases the intracellular concentration of dUTP so that uracil cannot be incorporated into DNA. The chain is Deoxyuridine 5'-triphosphate nucleotidohydrolase from Pseudomonas aeruginosa (strain LESB58).